A 342-amino-acid chain; its full sequence is tRNA N6-adenosine threonylcarbamoyltransferase (342 aa).

Fe cation-binding residues include His-111 and His-115. Residues 134–138 (LVSGG), Asp-167, Gly-180, and Asn-277 contribute to the substrate site. Asp-305 serves as a coordination point for Fe cation.

The protein belongs to the KAE1 / TsaD family. Fe(2+) is required as a cofactor.

It localises to the cytoplasm. It catalyses the reaction L-threonylcarbamoyladenylate + adenosine(37) in tRNA = N(6)-L-threonylcarbamoyladenosine(37) in tRNA + AMP + H(+). Functionally, required for the formation of a threonylcarbamoyl group on adenosine at position 37 (t(6)A37) in tRNAs that read codons beginning with adenine. Is involved in the transfer of the threonylcarbamoyl moiety of threonylcarbamoyl-AMP (TC-AMP) to the N6 group of A37, together with TsaE and TsaB. TsaD likely plays a direct catalytic role in this reaction. This Cellvibrio japonicus (strain Ueda107) (Pseudomonas fluorescens subsp. cellulosa) protein is tRNA N6-adenosine threonylcarbamoyltransferase.